The following is a 131-amino-acid chain: Small ribosomal subunit protein uS11 (131 aa).

It belongs to the universal ribosomal protein uS11 family. Part of the 30S ribosomal subunit. Interacts with proteins S7 and S18. Binds to IF-3.

Located on the platform of the 30S subunit, it bridges several disparate RNA helices of the 16S rRNA. Forms part of the Shine-Dalgarno cleft in the 70S ribosome. This chain is Small ribosomal subunit protein uS11, found in Natranaerobius thermophilus (strain ATCC BAA-1301 / DSM 18059 / JW/NM-WN-LF).